The sequence spans 876 residues: Leucine--tRNA ligase (876 aa).

A 'HIGH' region motif is present at residues 43-53 (PYPSGRIHMGH). The short motif at 632–636 (KMSKS) is the 'KMSKS' region element. Lys-635 serves as a coordination point for ATP.

It belongs to the class-I aminoacyl-tRNA synthetase family.

The protein resides in the cytoplasm. The enzyme catalyses tRNA(Leu) + L-leucine + ATP = L-leucyl-tRNA(Leu) + AMP + diphosphate. The polypeptide is Leucine--tRNA ligase (Sinorhizobium fredii (strain NBRC 101917 / NGR234)).